A 148-amino-acid polypeptide reads, in one-letter code: Probable DNA-directed RNA polymerases I, II, and III subunit RPABC3 (148 aa).

Residues 16-40 (DPDGKKFDRVSRYFCDAESFKMELI) are non-specific ssDNA binding.

This sequence belongs to the eukaryotic RPB8 RNA polymerase subunit family. Component of the RNA polymerase I (Pol I), RNA polymerase II (Pol II) and RNA polymerase III (Pol III) complexes consisting of at least 13, 12 and 17 subunits, respectively. Directly interacts with POLR2A.

It is found in the nucleus. Functionally, DNA-dependent RNA polymerase catalyzes the transcription of DNA into RNA using the four ribonucleoside triphosphates as substrates. Common component of RNA polymerases I, II and III which synthesize ribosomal RNA precursors, mRNA precursors and many functional non-coding RNAs, and small RNAs, such as 5S rRNA and tRNAs, respectively. This is Probable DNA-directed RNA polymerases I, II, and III subunit RPABC3 (rpb-8) from Caenorhabditis elegans.